Here is a 393-residue protein sequence, read N- to C-terminus: Exosome complex component RRP45 (393 aa).

The ARE binding stretch occupies residues 1 to 268; that stretch reads MRDTPLSNCE…SEITELINKA (268 aa).

It belongs to the RNase PH family. As to quaternary structure, component of the RNA exosome complex.

The protein resides in the cytoplasm. It localises to the nucleus. Its subcellular location is the nucleolus. The protein localises to the nucleoplasm. Functionally, non-catalytic component of the RNA exosome complex which has 3'-&gt;5' exoribonuclease activity and participates in a multitude of cellular RNA processing and degradation events. In the nucleus, the RNA exosome complex is involved in proper maturation of stable RNA species such as rRNA, snRNA and snoRNA, in the elimination of RNA processing by-products and non-coding 'pervasive' transcripts, such as antisense RNA species and promoter-upstream transcripts (PROMPTs), and of mRNAs with processing defects, thereby limiting or excluding their export to the cytoplasm. In the cytoplasm, the RNA exosome complex is involved in general mRNA turnover and specifically degrades inherently unstable mRNAs containing AU-rich elements (AREs) within their 3' untranslated regions, and in RNA surveillance pathways, preventing translation of aberrant mRNAs. The polypeptide is Exosome complex component RRP45 (Danio rerio (Zebrafish)).